A 313-amino-acid chain; its full sequence is R2-like ligand binding oxidase (313 aa).

Mn(2+) contacts are provided by Glu68, Glu101, and His104. A cross-link (3-(O4'-tyrosyl)-valine (Val-Tyr)) is located at residues 71-162 (VTQDIQPFMS…AAQVRASVTY (92 aa)). Fe cation is bound at residue Glu101. Residues Glu167, Glu202, and His205 each coordinate Fe cation.

This sequence belongs to the ribonucleoside diphosphate reductase small chain family. R2-like ligand binding oxidase subfamily. As to quaternary structure, homodimer. The cofactor is Fe cation. Mn(2+) is required as a cofactor.

In terms of biological role, probable oxidase that might be involved in lipid metabolism. This Mycobacteroides abscessus (strain ATCC 19977 / DSM 44196 / CCUG 20993 / CIP 104536 / JCM 13569 / NCTC 13031 / TMC 1543 / L948) (Mycobacterium abscessus) protein is R2-like ligand binding oxidase.